Here is a 660-residue protein sequence, read N- to C-terminus: Polyadenylate-binding protein 3 (660 aa).

RRM domains follow at residues 49–126 (SSLY…LSNR), 136–213 (GNIF…HFIR), 229–306 (TNVY…RAQK), and 332–409 (ANLY…LAQR). In terms of domain architecture, PABC spans 571–648 (PISKLTSSLA…ALDVLRLSVD (78 aa)).

The protein belongs to the polyadenylate-binding protein type-1 family. Expressed predominantly in immature flowers. Detected in tapetum and pollen. Strongly expressed in immatures siliques.

Its subcellular location is the cytoplasm. The protein resides in the nucleus. Its function is as follows. Binds the poly(A) tail of mRNA. Appears to be an important mediator of the multiple roles of the poly(A) tail in mRNA biogenesis, stability and translation. In the cytoplasm, affects both translation and mRNA decay. Inhibits the polyadenylated RNA degradation by the Rrp41p 3'--&gt;5' exonuclease in vitro. Binds with the 5'UTRs of PAB2, PAB3 and with a lower affinity with the 5'UTR of PAB5. The protein is Polyadenylate-binding protein 3 (PAB3) of Arabidopsis thaliana (Mouse-ear cress).